A 107-amino-acid chain; its full sequence is MKIKKGDLVQVITGKDKGKQGKVIVAYPAQDRVLVEGVNRVKKHTKAGQTARGSQTGGIVTTEAPIHVSNVQLVVEKDGNKVVTRVGYRFDDEGNKIRVAKRTGEDI.

Belongs to the universal ribosomal protein uL24 family. As to quaternary structure, part of the 50S ribosomal subunit.

Its function is as follows. One of two assembly initiator proteins, it binds directly to the 5'-end of the 23S rRNA, where it nucleates assembly of the 50S subunit. In terms of biological role, one of the proteins that surrounds the polypeptide exit tunnel on the outside of the subunit. The polypeptide is Large ribosomal subunit protein uL24 (Streptomyces griseus subsp. griseus (strain JCM 4626 / CBS 651.72 / NBRC 13350 / KCC S-0626 / ISP 5235)).